Reading from the N-terminus, the 90-residue chain is Large ribosomal subunit protein eL33 (90 aa).

Belongs to the eukaryotic ribosomal protein eL33 family.

This chain is Large ribosomal subunit protein eL33, found in Methanopyrus kandleri (strain AV19 / DSM 6324 / JCM 9639 / NBRC 100938).